The primary structure comprises 144 residues: Large ribosomal subunit protein uL15 (144 aa).

The interval 20–49 (GRGIGSGLGKTGGRGHKGQKSRSGGFHKVG) is disordered. Residues 21–31 (RGIGSGLGKTG) are compositionally biased toward gly residues.

This sequence belongs to the universal ribosomal protein uL15 family. As to quaternary structure, part of the 50S ribosomal subunit.

In terms of biological role, binds to the 23S rRNA. This chain is Large ribosomal subunit protein uL15, found in Neisseria gonorrhoeae (strain ATCC 700825 / FA 1090).